Reading from the N-terminus, the 600-residue chain is Gamma-terpinene synthase, chloroplastic (600 aa).

The N-terminal 40 residues, 1 to 40 (MALNLLSSLPAACNFTRLSLPLSSKVNGFVPPITQVQYPM), are a transit peptide targeting the chloroplast. 4 residues coordinate Mg(2+): aspartate 353, aspartate 357, aspartate 498, and glutamate 506. The DDXXD motif motif lies at 353–357 (DDVYD).

This sequence belongs to the terpene synthase family. Requires Mn(2+) as cofactor. It depends on Mg(2+) as a cofactor.

The protein localises to the plastid. It localises to the chloroplast. The enzyme catalyses (2E)-geranyl diphosphate = gamma-terpinene + diphosphate. The protein operates within secondary metabolite biosynthesis; terpenoid biosynthesis. Its activity is regulated as follows. Inhibited by 100 mM KCl. In terms of biological role, monoterpene synthase which catalyzes the conversion of geranyl diphosphate to gamma-terpinene and the minor products limonene, alpha-pinene, beta-pinene, alpha-terpinolene, alpha-thujene, alpha-terpinene, myrcene and sabinene. The sequence is that of Gamma-terpinene synthase, chloroplastic from Citrus limon (Lemon).